Reading from the N-terminus, the 362-residue chain is Heat-inducible transcription repressor HrcA (362 aa).

Belongs to the HrcA family.

Its function is as follows. Negative regulator of class I heat shock genes (grpE-dnaK-dnaJ and groELS operons). Prevents heat-shock induction of these operons. The polypeptide is Heat-inducible transcription repressor HrcA (Nitrobacter hamburgensis (strain DSM 10229 / NCIMB 13809 / X14)).